The sequence spans 136 residues: Histone H3.2 (136 aa).

Residues 1–42 form a disordered region; that stretch reads MARTKQTARKSTGGKAPRKQLATKAARKSAPSAGGVKKPHRY. Lys-5 is subject to N6,N6,N6-trimethyllysine; alternate. Lys-5 carries the N6,N6-dimethyllysine; alternate modification. Residues Lys-5 and Lys-10 each carry the N6-methyllysine; alternate modification. The residue at position 10 (Lys-10) is an N6-acetyllysine; alternate. A Phosphoserine modification is found at Ser-11. N6,N6-dimethyllysine; alternate is present on Lys-15. 5 positions are modified to N6-acetyllysine; alternate: Lys-15, Lys-19, Lys-24, Lys-28, and Lys-37. N6-methyllysine; alternate occurs at positions 19, 24, 28, and 37. Lys-28 and Lys-37 each carry N6,N6,N6-trimethyllysine; alternate. An N6,N6-dimethyllysine; alternate mark is found at Lys-28 and Lys-37. N6-acetyllysine is present on residues Lys-57 and Lys-65. N6,N6,N6-trimethyllysine; alternate is present on Lys-80. Lys-80 is subject to N6,N6-dimethyllysine; alternate. Lys-80 carries the post-translational modification N6-methyllysine; alternate.

This sequence belongs to the histone H3 family. The nucleosome is a histone octamer containing two molecules each of H2A, H2B, H3 and H4 assembled in one H3-H4 heterotetramer and two H2A-H2B heterodimers. The octamer wraps approximately 147 bp of DNA. In terms of processing, phosphorylated to form H3S10ph. H3S10ph promotes subsequent H3K14ac formation and is required for transcriptional activation through TBP recruitment to the promoters. Post-translationally, mono-, di- and trimethylated by the COMPASS complex to form H3K4me1/2/3. H3K4me activates gene expression by regulating transcription elongation and plays a role in telomere length maintenance. H3K4me enrichment correlates with transcription levels, and occurs in a 5' to 3' gradient with H3K4me3 enrichment at the 5'-end of genes, shifting to H3K4me2 and then H3K4me1. Methylated by SET2 to form H3K36me. H3K36me represses gene expression. Methylated by DOT1 to form H3K79me. H3K79me is required for association of SIR proteins with telomeric regions and for telomeric silencing. The COMPASS-mediated formation of H3K4me2/3 and the DOT1-mediated formation of H3K79me require H2BK123ub1. Acetylation of histone H3 leads to transcriptional activation. H3K14ac formation by GCN5 is promoted by H3S10ph. H3K14ac can also be formed by ESA1. H3K56ac formation occurs predominantly in newly synthesized H3 molecules during G1, S and G2/M of the cell cycle and may be involved in DNA repair.

Its subcellular location is the nucleus. The protein resides in the chromosome. Functionally, core component of nucleosome. Nucleosomes wrap and compact DNA into chromatin, limiting DNA accessibility to the cellular machineries which require DNA as a template. Histones thereby play a central role in transcription regulation, DNA repair, DNA replication and chromosomal stability. DNA accessibility is regulated via a complex set of post-translational modifications of histones, also called histone code, and nucleosome remodeling. The protein is Histone H3.2 (HHT2) of Mycosarcoma maydis (Corn smut fungus).